Consider the following 78-residue polypeptide: Probable [Fe-S]-dependent transcriptional repressor (78 aa).

Iron-sulfur cluster contacts are provided by cysteine 56, cysteine 61, cysteine 64, and cysteine 70.

It belongs to the FeoC family.

May function as a transcriptional regulator that controls feoABC expression. The protein is Probable [Fe-S]-dependent transcriptional repressor of Salmonella agona (strain SL483).